The sequence spans 139 residues: Holo-[acyl-carrier-protein] synthase (139 aa).

Positions 8 and 57 each coordinate Mg(2+).

The protein belongs to the P-Pant transferase superfamily. AcpS family. Mg(2+) serves as cofactor.

The protein resides in the cytoplasm. The enzyme catalyses apo-[ACP] + CoA = holo-[ACP] + adenosine 3',5'-bisphosphate + H(+). Functionally, transfers the 4'-phosphopantetheine moiety from coenzyme A to a Ser of acyl-carrier-protein. In Sinorhizobium fredii (strain NBRC 101917 / NGR234), this protein is Holo-[acyl-carrier-protein] synthase.